The primary structure comprises 626 residues: Chaperone protein HtpG (626 aa).

The tract at residues 1–341 (METKQFKAES…SEDLSLNISR (341 aa)) is a; substrate-binding. Residues 342 to 552 (EILQHDRQLK…EGELSIEMEK (211 aa)) form a b region. The interval 490–509 (DLGIEGEEKENTSSSDDKEN) is disordered. The span at 498–509 (KENTSSSDDKEN) shows a compositional bias: basic and acidic residues. The segment at 553-626 (VLNAMPNNQN…FTNNICKIMK (74 aa)) is c.

The protein belongs to the heat shock protein 90 family. Homodimer.

The protein resides in the cytoplasm. Molecular chaperone. Has ATPase activity. The chain is Chaperone protein HtpG from Clostridium botulinum (strain Okra / Type B1).